A 971-amino-acid chain; its full sequence is Polyamine-modulated factor 1-binding protein 1 (971 aa).

6 coiled-coil regions span residues 37-69, 117-229, 282-325, 355-680, 706-827, and 879-916; these read NKQY…LQAS, EKLH…ACSN, LHVE…LREE, QKLS…SAIQ, QDDL…DEKE, and IAKL…KAGT.

Expressed in testis and more specifically in ODF, the sperm tail specific cytoskeletal structure. Also expressed in epididymides and brain.

Its subcellular location is the cell projection. The protein resides in the cilium. The protein localises to the flagellum. Its function is as follows. Required for normal spermatogenesis. It functions as a scaffold protein that attaches the sperm head-tail connecting piece to the nuclear envelope, thus maintaining sperm head and tail integrity. May also be involved in the general organization of cellular cytoskeleton. The protein is Polyamine-modulated factor 1-binding protein 1 (Pmfbp1) of Rattus norvegicus (Rat).